Consider the following 473-residue polypeptide: Photosystem II CP43 reaction center protein (473 aa).

A propeptide spanning residues 1 to 14 (MKTLYSLRRFYPVE) is cleaved from the precursor. T15 carries the N-acetylthreonine modification. T15 is subject to Phosphothreonine. 5 helical membrane passes run 69 to 93 (LFEVAHFVPEKPMYEQGLILLPHLA), 134 to 155 (LIGPETLEESFPFFGYVWKDKN), 178 to 200 (KALYFGGVYDTWAPGGGDVRKIT), 255 to 275 (KPFAWARRAFIWSGEAYLSYS), and 291 to 312 (WFNNTAYPSEFYGPTGPEASQA). E367 serves as a coordination point for [CaMn4O5] cluster. A helical transmembrane segment spans residues 447-471 (RARAAAAGFEKGIDRDTEPVLSMTP).

Belongs to the PsbB/PsbC family. PsbC subfamily. PSII is composed of 1 copy each of membrane proteins PsbA, PsbB, PsbC, PsbD, PsbE, PsbF, PsbH, PsbI, PsbJ, PsbK, PsbL, PsbM, PsbT, PsbX, PsbY, PsbZ, Psb30/Ycf12, at least 3 peripheral proteins of the oxygen-evolving complex and a large number of cofactors. It forms dimeric complexes. Binds multiple chlorophylls and provides some of the ligands for the Ca-4Mn-5O cluster of the oxygen-evolving complex. It may also provide a ligand for a Cl- that is required for oxygen evolution. PSII binds additional chlorophylls, carotenoids and specific lipids. serves as cofactor.

It localises to the plastid. The protein localises to the chloroplast thylakoid membrane. One of the components of the core complex of photosystem II (PSII). It binds chlorophyll and helps catalyze the primary light-induced photochemical processes of PSII. PSII is a light-driven water:plastoquinone oxidoreductase, using light energy to abstract electrons from H(2)O, generating O(2) and a proton gradient subsequently used for ATP formation. The sequence is that of Photosystem II CP43 reaction center protein from Angiopteris evecta (Mule's foot fern).